The chain runs to 959 residues: DEAD-box ATP-dependent RNA helicase rde-12 (959 aa).

The interval 1-336 (MSSFGNNAGG…EGVNAPVRAP (336 aa)) is disordered. Over residues 71 to 97 (GRREDDRSHSRDNHGGSRYGERDDRGN) the composition is skewed to basic and acidic residues. The segment covering 98–118 (NGRSADNRYSQSNYNYDSNRG) has biased composition (polar residues). Residues 122 to 134 (YQRDNHGSKDDRG) are compositionally biased toward basic and acidic residues. The span at 137-160 (NQYNDHGSNHNSNSRNDQYRQGSY) shows a compositional bias: polar residues. Composition is skewed to basic and acidic residues over residues 166–181 (SGYR…DNDQ) and 189–201 (RDSD…DHHN). Polar residues predominate over residues 202–213 (YNSQSSPRSHQG). 2 stretches are compositionally biased toward basic and acidic residues: residues 219-239 (SAPK…HDSY) and 255-270 (YRND…DHRS). Residues 271 to 280 (GGNNSSSGFK) are compositionally biased toward low complexity. Residues 281–301 (NDGGFGGNDNRGFGNNGGGSF) show a composition bias toward gly residues. The span at 302 to 317 (GNPNNSYRGNSNNIGG) shows a compositional bias: low complexity. The Q motif signature appears at 380-408 (TSWTNSGLHPTILETLKRIKYNNVRTIQG). A Helicase ATP-binding domain is found at 411–599 (IPQVLDGHDV…NELMKRLPGQ (189 aa)). 424-431 (AETSAGKT) lines the ATP pocket. The short motif at 539-542 (DEAD) is the DEAD box element. The Helicase C-terminal domain occupies 632–792 (KLREILKQNV…KVPDFLDAMA (161 aa)). Disordered stretches follow at residues 793-834 (KSSR…GGGR) and 858-959 (GGGG…DDEW). 2 stretches are compositionally biased toward gly residues: residues 800–834 (GTSG…GGGR) and 858–872 (GGGG…GFGG). Over residues 930–941 (TLGSSTFGTANN) the composition is skewed to polar residues. Acidic residues predominate over residues 942–959 (ADEEPTETGADGNDDDEW).

The protein belongs to the DEAD box helicase family. DDX3/DED1 subfamily. In terms of assembly, interacts with wago-1, ergo-1 and rde-1. Requires Mg(2+) as cofactor. As to expression, expressed in the soma and germline.

It localises to the cytoplasm. Its subcellular location is the perinuclear region. The protein localises to the cytoplasmic granule. It is found in the P-body. It carries out the reaction ATP + H2O = ADP + phosphate + H(+). In terms of biological role, probable ATP-dependent RNA helicase involved in RNAi-mediated gene silencing. Specifically required in the endogenous siRNA pathway for biogenesis of secondary endogenous small interfering RNA (siRNA) intermediates called 22G-RNAs. May associate with and recruit rde-10 to primary siRNA-targeted mRNA for secondary siRNA synthesis. May be recruited to target mRNAs by rde-1 and/or ergo-1. The sequence is that of DEAD-box ATP-dependent RNA helicase rde-12 from Caenorhabditis elegans.